A 134-amino-acid chain; its full sequence is DNA-directed RNA polymerase subunit omega (134 aa).

The interval isoleucine 77–valine 108 is disordered. Positions alanine 85–serine 97 are enriched in low complexity.

It belongs to the RNA polymerase subunit omega family. In terms of assembly, the RNAP catalytic core consists of 2 alpha, 1 beta, 1 beta' and 1 omega subunit. When a sigma factor is associated with the core the holoenzyme is formed, which can initiate transcription.

It catalyses the reaction RNA(n) + a ribonucleoside 5'-triphosphate = RNA(n+1) + diphosphate. Promotes RNA polymerase assembly. Latches the N- and C-terminal regions of the beta' subunit thereby facilitating its interaction with the beta and alpha subunits. This chain is DNA-directed RNA polymerase subunit omega, found in Rhizobium rhizogenes (strain K84 / ATCC BAA-868) (Agrobacterium radiobacter).